The chain runs to 128 residues: Glycine cleavage system H protein (128 aa).

In terms of domain architecture, Lipoyl-binding spans 23–105 (KVRIGITDFA…YEKAWMIVVE (83 aa)). An N6-lipoyllysine modification is found at Lys64.

This sequence belongs to the GcvH family. In terms of assembly, the glycine cleavage system is composed of four proteins: P, T, L and H. It depends on (R)-lipoate as a cofactor.

Functionally, the glycine cleavage system catalyzes the degradation of glycine. The H protein shuttles the methylamine group of glycine from the P protein to the T protein. Its function is as follows. Is also involved in protein lipoylation via its role as an octanoyl/lipoyl carrier protein intermediate. This is Glycine cleavage system H protein from Halalkalibacterium halodurans (strain ATCC BAA-125 / DSM 18197 / FERM 7344 / JCM 9153 / C-125) (Bacillus halodurans).